Here is a 102-residue protein sequence, read N- to C-terminus: Small ribosomal subunit protein uS10 (102 aa).

This sequence belongs to the universal ribosomal protein uS10 family. As to quaternary structure, part of the 30S ribosomal subunit.

Involved in the binding of tRNA to the ribosomes. The chain is Small ribosomal subunit protein uS10 from Caldanaerobacter subterraneus subsp. tengcongensis (strain DSM 15242 / JCM 11007 / NBRC 100824 / MB4) (Thermoanaerobacter tengcongensis).